Consider the following 226-residue polypeptide: MKFAVIVFPGSNCDLDMYHAVKDVLGEEAEYVFHTETSLEGFDGVLLPGGFSYGDYLRCGSIAQFSPIMAEVKRFAEEGRPVLGVCNGFQVLVEAGLLPGVLMRNRDLKFMCKTVDLVVENNETMFTSEYAAQETIRVPIAHGEGNYYCDDATLAALKANGQIAFTYKENPNGSVENIAGITNEAGNVLGMMPHPERAVEALLGGEDGKRLFTSIVKWGARHVTYN.

The 223-residue stretch at 3 to 225 folds into the Glutamine amidotransferase type-1 domain; the sequence is FAVIVFPGSN…VKWGARHVTY (223 aa). Residue C86 is the Nucleophile of the active site. Active-site residues include H194 and E196.

In terms of assembly, part of the FGAM synthase complex composed of 1 PurL, 1 PurQ and 2 PurS subunits.

It localises to the cytoplasm. It carries out the reaction N(2)-formyl-N(1)-(5-phospho-beta-D-ribosyl)glycinamide + L-glutamine + ATP + H2O = 2-formamido-N(1)-(5-O-phospho-beta-D-ribosyl)acetamidine + L-glutamate + ADP + phosphate + H(+). The enzyme catalyses L-glutamine + H2O = L-glutamate + NH4(+). Its pathway is purine metabolism; IMP biosynthesis via de novo pathway; 5-amino-1-(5-phospho-D-ribosyl)imidazole from N(2)-formyl-N(1)-(5-phospho-D-ribosyl)glycinamide: step 1/2. Functionally, part of the phosphoribosylformylglycinamidine synthase complex involved in the purines biosynthetic pathway. Catalyzes the ATP-dependent conversion of formylglycinamide ribonucleotide (FGAR) and glutamine to yield formylglycinamidine ribonucleotide (FGAM) and glutamate. The FGAM synthase complex is composed of three subunits. PurQ produces an ammonia molecule by converting glutamine to glutamate. PurL transfers the ammonia molecule to FGAR to form FGAM in an ATP-dependent manner. PurS interacts with PurQ and PurL and is thought to assist in the transfer of the ammonia molecule from PurQ to PurL. The protein is Phosphoribosylformylglycinamidine synthase subunit PurQ of Exiguobacterium sp. (strain ATCC BAA-1283 / AT1b).